The sequence spans 228 residues: tRNA (guanine-N(1)-)-methyltransferase (228 aa).

Residues G111 and 135-140 (LGDYVL) contribute to the S-adenosyl-L-methionine site.

Belongs to the RNA methyltransferase TrmD family. In terms of assembly, homodimer.

Its subcellular location is the cytoplasm. It carries out the reaction guanosine(37) in tRNA + S-adenosyl-L-methionine = N(1)-methylguanosine(37) in tRNA + S-adenosyl-L-homocysteine + H(+). Functionally, specifically methylates guanosine-37 in various tRNAs. In Clavibacter sepedonicus (Clavibacter michiganensis subsp. sepedonicus), this protein is tRNA (guanine-N(1)-)-methyltransferase.